The primary structure comprises 142 residues: UPF0179 protein PH1477 (142 aa).

This sequence belongs to the UPF0179 family.

This is UPF0179 protein PH1477 from Pyrococcus horikoshii (strain ATCC 700860 / DSM 12428 / JCM 9974 / NBRC 100139 / OT-3).